Consider the following 116-residue polypeptide: uncharacterized protein (116 aa).

Residues 5-113 form the VOC domain; sequence EVKMVVLSTE…TGNGLVFYSP (109 aa). Lysine 76 participates in a covalent cross-link: Isoglutamyl lysine isopeptide (Lys-Gln) (interchain with Q-Cter in protein Pup).

This is an uncharacterized protein from Mycolicibacterium smegmatis (strain ATCC 700084 / mc(2)155) (Mycobacterium smegmatis).